Here is a 356-residue protein sequence, read N- to C-terminus: UDP-N-acetylglucosamine--N-acetylmuramyl-(pentapeptide) pyrophosphoryl-undecaprenol N-acetylglucosamine transferase (356 aa).

UDP-N-acetyl-alpha-D-glucosamine-binding positions include threonine 12–glycine 14, asparagine 124, arginine 163, serine 188, isoleucine 242, alanine 261–glutamate 266, and glutamine 287.

The protein belongs to the glycosyltransferase 28 family. MurG subfamily.

It localises to the cell inner membrane. The catalysed reaction is di-trans,octa-cis-undecaprenyl diphospho-N-acetyl-alpha-D-muramoyl-L-alanyl-D-glutamyl-meso-2,6-diaminopimeloyl-D-alanyl-D-alanine + UDP-N-acetyl-alpha-D-glucosamine = di-trans,octa-cis-undecaprenyl diphospho-[N-acetyl-alpha-D-glucosaminyl-(1-&gt;4)]-N-acetyl-alpha-D-muramoyl-L-alanyl-D-glutamyl-meso-2,6-diaminopimeloyl-D-alanyl-D-alanine + UDP + H(+). The protein operates within cell wall biogenesis; peptidoglycan biosynthesis. In terms of biological role, cell wall formation. Catalyzes the transfer of a GlcNAc subunit on undecaprenyl-pyrophosphoryl-MurNAc-pentapeptide (lipid intermediate I) to form undecaprenyl-pyrophosphoryl-MurNAc-(pentapeptide)GlcNAc (lipid intermediate II). The polypeptide is UDP-N-acetylglucosamine--N-acetylmuramyl-(pentapeptide) pyrophosphoryl-undecaprenol N-acetylglucosamine transferase (Pseudomonas fluorescens (strain ATCC BAA-477 / NRRL B-23932 / Pf-5)).